The sequence spans 434 residues: Evolutionarily conserved signaling intermediate in Toll pathway, mitochondrial (434 aa).

The transit peptide at 1 to 48 directs the protein to the mitochondrion; that stretch reads MSWVQVNLLARGLSRGWGSICRTVLSGTPFAQPSLQARGLHCSAVTHK. A Glycyl lysine isopeptide (Lys-Gly) (interchain with G-Cter in ubiquitin) cross-link involves residue lysine 371. A disordered region spans residues 403–434; that stretch reads TRLEGQSPPHSPPKGPEEDDEAIQAQQRQGQS.

The protein belongs to the ECSIT family. Interacts with MAP3K1, SMAD4 and TRAF6. Interacts with SMAD1 only after BMP4-treatment. Part of the mitochondrial complex I assembly/MCIA complex that comprises at least the core subunits TMEM126B, NDUFAF1, ECSIT and ACAD9 and complement subunits such as COA1 and TMEM186. Interacts with NDUFAF1. Interacts with ACAD9. Interacts with TRIM59. Interacts with TMEM70 and TMEM242. Interacts (when ubiquitinated) with NF-kappa-B subunits RELA and NFKB1. Interacts with RIGI, IFIT1 and MAVS; these interactions promote RLR-mediated type I IFN induction. Interacts with SQSTM1; this interaction inhibits TLR4 signaling via functional regulation of the TRAF6-ECSIT complex. Interacts with cereblon/CRBN; this interaction inhibits the ubiquitination of ECSIT. Ubiquitinated on Lys-371; leading to translocation in the nucleus together with RELA and NFKB1 and expression of NF-kappa-B-dependent genes.

Its subcellular location is the cytoplasm. The protein localises to the nucleus. It localises to the mitochondrion. Functionally, adapter protein that plays a role in different signaling pathways including TLRs and IL-1 pathways or innate antiviral induction signaling. Plays a role in the activation of NF-kappa-B by forming a signal complex with TRAF6 and TAK1/MAP3K7 to activate TAK1/MAP3K7 leading to activation of IKKs. Once ubiquitinated, interacts with the dissociated RELA and NFKB1 proteins and translocates to the nucleus where it induces NF-kappa-B-dependent gene expression. Plays a role in innate antiviral immune response by bridging the pattern recognition receptors RIGI and MDA5/IFIT1 to the MAVS complex at the mitochondrion. Promotes proteolytic activation of MAP3K1. Involved in the BMP signaling pathway. Required for normal embryonic development. As part of the MCIA complex, involved in the assembly of the mitochondrial complex I. This Rattus norvegicus (Rat) protein is Evolutionarily conserved signaling intermediate in Toll pathway, mitochondrial.